Consider the following 327-residue polypeptide: GTPase Obg (327 aa).

Residues 1-159 (MQFIDQANII…WEVQLELKLL (159 aa)) form the Obg domain. In terms of domain architecture, OBG-type G spans 160-327 (AEVGIIGLPN…PLLSEVWKRI (168 aa)). ATP-binding positions include 166-173 (GLPNAGKS), 191-195 (FTTLI), 213-216 (DIPG), 280-283 (NKME), and 309-311 (SSS). Mg(2+) is bound by residues Ser-173 and Thr-193.

This sequence belongs to the TRAFAC class OBG-HflX-like GTPase superfamily. OBG GTPase family. In terms of assembly, monomer. The cofactor is Mg(2+).

Its subcellular location is the cytoplasm. Functionally, an essential GTPase which binds GTP, GDP and possibly (p)ppGpp with moderate affinity, with high nucleotide exchange rates and a fairly low GTP hydrolysis rate. Plays a role in control of the cell cycle, stress response, ribosome biogenesis and in those bacteria that undergo differentiation, in morphogenesis control. The protein is GTPase Obg of Prochlorococcus marinus subsp. pastoris (strain CCMP1986 / NIES-2087 / MED4).